The primary structure comprises 310 residues: UDP-N-acetylenolpyruvoylglucosamine reductase (310 aa).

Residues 31 to 216 (KIGGPADYFV…LRKIEELNQA (186 aa)) enclose the FAD-binding PCMH-type domain. Arg180 is an active-site residue. The Proton donor role is filled by Ser230. Glu300 is a catalytic residue.

It belongs to the MurB family. FAD serves as cofactor.

It localises to the cytoplasm. The enzyme catalyses UDP-N-acetyl-alpha-D-muramate + NADP(+) = UDP-N-acetyl-3-O-(1-carboxyvinyl)-alpha-D-glucosamine + NADPH + H(+). It functions in the pathway cell wall biogenesis; peptidoglycan biosynthesis. Its function is as follows. Cell wall formation. The chain is UDP-N-acetylenolpyruvoylglucosamine reductase from Lachnoclostridium phytofermentans (strain ATCC 700394 / DSM 18823 / ISDg) (Clostridium phytofermentans).